The sequence spans 255 residues: Triosephosphate isomerase (255 aa).

10-12 is a substrate binding site; sequence NWK. Histidine 96 serves as the catalytic Electrophile. Glutamate 168 (proton acceptor) is an active-site residue. Substrate is bound by residues glycine 174, serine 213, and 234–235; that span reads GG.

The protein belongs to the triosephosphate isomerase family. Homodimer.

It localises to the cytoplasm. It catalyses the reaction D-glyceraldehyde 3-phosphate = dihydroxyacetone phosphate. It functions in the pathway carbohydrate biosynthesis; gluconeogenesis. Its pathway is carbohydrate degradation; glycolysis; D-glyceraldehyde 3-phosphate from glycerone phosphate: step 1/1. Functionally, involved in the gluconeogenesis. Catalyzes stereospecifically the conversion of dihydroxyacetone phosphate (DHAP) to D-glyceraldehyde-3-phosphate (G3P). This chain is Triosephosphate isomerase, found in Histophilus somni (strain 129Pt) (Haemophilus somnus).